We begin with the raw amino-acid sequence, 138 residues long: Cysteine desulfuration protein SufE (138 aa).

The Cysteine persulfide intermediate role is filled by C51.

The protein belongs to the SufE family. Homodimer. Interacts with SufS.

It localises to the cytoplasm. It participates in cofactor biosynthesis; iron-sulfur cluster biosynthesis. Participates in cysteine desulfuration mediated by SufS. Cysteine desulfuration mobilizes sulfur from L-cysteine to yield L-alanine and constitutes an essential step in sulfur metabolism for biosynthesis of a variety of sulfur-containing biomolecules. Functions as a sulfur acceptor for SufS, by mediating the direct transfer of the sulfur atom from the S-sulfanylcysteine of SufS, an intermediate product of cysteine desulfuration process. The sequence is that of Cysteine desulfuration protein SufE from Salmonella agona (strain SL483).